The chain runs to 160 residues: Transcription elongation factor GreA (160 aa).

The stretch at Ile14–Glu38 forms a coiled coil.

This sequence belongs to the GreA/GreB family.

Necessary for efficient RNA polymerase transcription elongation past template-encoded arresting sites. The arresting sites in DNA have the property of trapping a certain fraction of elongating RNA polymerases that pass through, resulting in locked ternary complexes. Cleavage of the nascent transcript by cleavage factors such as GreA or GreB allows the resumption of elongation from the new 3'terminus. GreA releases sequences of 2 to 3 nucleotides. This chain is Transcription elongation factor GreA, found in Maridesulfovibrio salexigens (strain ATCC 14822 / DSM 2638 / NCIMB 8403 / VKM B-1763) (Desulfovibrio salexigens).